We begin with the raw amino-acid sequence, 132 residues long: Gonadotropin subunit beta-1 (132 aa).

An N-terminal signal peptide occupies residues 1–17 (MMRGVTMVLLLPMLVWA). Disulfide bonds link Cys-25/Cys-73, Cys-39/Cys-88, Cys-50/Cys-104, Cys-54/Cys-106, and Cys-109/Cys-116. 2 N-linked (GlcNAc...) asparagine glycosylation sites follow: Asn-29 and Asn-46.

The protein belongs to the glycoprotein hormones subunit beta family. In terms of assembly, heterodimer of an alpha and a beta chain.

It localises to the secreted. Its function is as follows. Involved in gametogenesis and steroidogenesis. The protein is Gonadotropin subunit beta-1 (cgba) of Ictalurus punctatus (Channel catfish).